The primary structure comprises 561 residues: DNA ligase B (561 aa).

Lys-125 serves as the catalytic N6-AMP-lysine intermediate.

The protein belongs to the NAD-dependent DNA ligase family. LigB subfamily.

It catalyses the reaction NAD(+) + (deoxyribonucleotide)n-3'-hydroxyl + 5'-phospho-(deoxyribonucleotide)m = (deoxyribonucleotide)n+m + AMP + beta-nicotinamide D-nucleotide.. Catalyzes the formation of phosphodiester linkages between 5'-phosphoryl and 3'-hydroxyl groups in double-stranded DNA using NAD as a coenzyme and as the energy source for the reaction. This is DNA ligase B from Salmonella dublin (strain CT_02021853).